Here is a 454-residue protein sequence, read N- to C-terminus: Aquaporin-7 (454 aa).

The Cytoplasmic portion of the chain corresponds to 1–71; the sequence is MNINEPRDGG…LHLHNKTRNH (71 aa). Residues 72-92 form a helical membrane-spanning segment; the sequence is FVATVAEFAGTTLFLFFAFSG. Topologically, residues 93–115 are extracellular; sequence TQVALLATPANDSNVVGTPSNPA. N103 carries N-linked (GlcNAc...) asparagine glycosylation. Residues 116 to 136 form a helical membrane-spanning segment; the sequence is QLLYVSLCFGFSLAVNAWVFF. Residues 137 to 163 are Cytoplasmic-facing; the sequence is RISGGLFNPAVTMGMCIVGALPYFRGL. An NPA 1 motif is present at residues 144–146; that stretch reads NPA. Residues 164 to 184 form a helical membrane-spanning segment; the sequence is LLIFAQIIGGIAAAAIVSALF. At 185–202 the chain is on the extracellular side; it reads PGPITFRTSLGGGTSIVQ. A helical membrane pass occupies residues 203–223; the sequence is GLFIEMFLTAELVFTIFMLAA. Residues 224–229 are Cytoplasmic-facing; that stretch reads EKHKGT. A helical transmembrane segment spans residues 230 to 250; that stretch reads FIAPIGIGLSLFIAELTGVYF. Over 251-274 the chain is Extracellular; that stretch reads TGGSVNPARSFGPSVVSGQFTGYH. Positions 256–258 match the NPA 2 motif; the sequence is NPA. Residues 275 to 295 form a helical membrane-spanning segment; sequence WIYWVGPILGAILASAFYKFI. Residues 296-454 lie on the Cytoplasmic side of the membrane; it reads KMLEYETANP…ENLRDNTHNN (159 aa). The interval 343 to 454 is disordered; the sequence is GASHVHENGN…ENLRDNTHNN (112 aa).

This sequence belongs to the MIP/aquaporin (TC 1.A.8) family.

The protein localises to the membrane. The enzyme catalyses H2O(in) = H2O(out). In terms of biological role, water channel required to facilitate the transport of water across membranes. Involved in conidiation. The chain is Aquaporin-7 from Botryotinia fuckeliana (strain B05.10) (Noble rot fungus).